The following is a 496-amino-acid chain: Glycerol kinase (496 aa).

An ADP-binding site is contributed by threonine 12. ATP is bound by residues threonine 12, threonine 13, and serine 14. Threonine 12 contacts sn-glycerol 3-phosphate. An ADP-binding site is contributed by arginine 16. Sn-glycerol 3-phosphate is bound by residues arginine 82, glutamate 83, and tyrosine 134. Glycerol is bound by residues arginine 82, glutamate 83, and tyrosine 134. Histidine 230 is modified (phosphohistidine; by HPr). Aspartate 244 contributes to the sn-glycerol 3-phosphate binding site. Residues aspartate 244 and glutamine 245 each coordinate glycerol. 2 residues coordinate ADP: threonine 266 and glycine 309. The ATP site is built by threonine 266, glycine 309, glutamine 313, and glycine 410. Residues glycine 410 and asparagine 414 each coordinate ADP.

The protein belongs to the FGGY kinase family. In terms of assembly, homotetramer and homodimer (in equilibrium). The phosphoenolpyruvate-dependent sugar phosphotransferase system (PTS), including enzyme I, and histidine-containing protein (HPr) are required for the phosphorylation, which leads to the activation of the enzyme.

It carries out the reaction glycerol + ATP = sn-glycerol 3-phosphate + ADP + H(+). It functions in the pathway polyol metabolism; glycerol degradation via glycerol kinase pathway; sn-glycerol 3-phosphate from glycerol: step 1/1. With respect to regulation, activated by phosphorylation and inhibited by fructose 1,6-bisphosphate (FBP). Functionally, key enzyme in the regulation of glycerol uptake and metabolism. Catalyzes the phosphorylation of glycerol to yield sn-glycerol 3-phosphate. The sequence is that of Glycerol kinase from Bacillus cytotoxicus (strain DSM 22905 / CIP 110041 / 391-98 / NVH 391-98).